The sequence spans 118 residues: uncharacterized protein (118 aa).

It to E.coli YeaO.

This is an uncharacterized protein from Mycobacterium bovis (strain ATCC BAA-935 / AF2122/97).